Reading from the N-terminus, the 167-residue chain is Beta-3 adrenergic receptor (167 aa).

Over 1-25 (RVGADAEAQECHSNPRCCSFASNMP) the chain is Extracellular. A disulfide bridge connects residues cysteine 11 and cysteine 17. Residues 26–47 (YALLSSSVSFYLPLLVMLFVYA) traverse the membrane as a helical segment. Residues 48-114 (RVFVVAKRQR…LPLREHRALR (67 aa)) lie on the Cytoplasmic side of the membrane. The disordered stretch occupies residues 66-97 (RFPPEESPRSPSRSPSPVAGGTGEAPDGVPSC). The helical transmembrane segment at 115–136 (TLGLIMGIFSLCWLPFFLANVL) threads the bilayer. Topologically, residues 137–148 (RALAGPSIVPNG) are extracellular. A helical transmembrane segment spans residues 149–167 (VFIALNWLGYANSAFNPLI).

Belongs to the G-protein coupled receptor 1 family. Adrenergic receptor subfamily. ADRB3 sub-subfamily. Interacts with ARRDC3.

The protein localises to the cell membrane. Functionally, beta-adrenergic receptors mediate the catecholamine-induced activation of adenylate cyclase through the action of G proteins. Beta-3 is involved in the regulation of lipolysis and thermogenesis. The polypeptide is Beta-3 adrenergic receptor (ADRB3) (Meriones unguiculatus (Mongolian jird)).